The sequence spans 1077 residues: Error-prone DNA polymerase (1077 aa).

The protein belongs to the DNA polymerase type-C family. DnaE2 subfamily.

The protein resides in the cytoplasm. The enzyme catalyses DNA(n) + a 2'-deoxyribonucleoside 5'-triphosphate = DNA(n+1) + diphosphate. Its function is as follows. DNA polymerase involved in damage-induced mutagenesis and translesion synthesis (TLS). It is not the major replicative DNA polymerase. This chain is Error-prone DNA polymerase, found in Brucella melitensis biotype 1 (strain ATCC 23456 / CCUG 17765 / NCTC 10094 / 16M).